The sequence spans 372 residues: Glutamate 5-kinase (372 aa).

Lys14 contacts ATP. Ser54, Asp141, and Asn153 together coordinate substrate. ATP is bound by residues 173-174 (TD) and 215-221 (TGGMSTK). The PUA domain maps to 280–358 (QGSLVLDAGA…DEIESVLGYD (79 aa)).

This sequence belongs to the glutamate 5-kinase family.

It is found in the cytoplasm. The enzyme catalyses L-glutamate + ATP = L-glutamyl 5-phosphate + ADP. Its pathway is amino-acid biosynthesis; L-proline biosynthesis; L-glutamate 5-semialdehyde from L-glutamate: step 1/2. Its function is as follows. Catalyzes the transfer of a phosphate group to glutamate to form L-glutamate 5-phosphate. The chain is Glutamate 5-kinase from Shewanella oneidensis (strain ATCC 700550 / JCM 31522 / CIP 106686 / LMG 19005 / NCIMB 14063 / MR-1).